Consider the following 485-residue polypeptide: Pup--protein ligase (485 aa).

Position 33 (Glu-33) interacts with Mg(2+). Position 76 (Arg-76) interacts with ATP. Tyr-78 contacts Mg(2+). Asp-80 functions as the Proton acceptor in the catalytic mechanism. Glu-86 serves as a coordination point for Mg(2+). The ATP site is built by Thr-89 and Trp-451.

Belongs to the Pup ligase/Pup deamidase family. Pup-conjugating enzyme subfamily.

It carries out the reaction ATP + [prokaryotic ubiquitin-like protein]-L-glutamate + [protein]-L-lysine = ADP + phosphate + N(6)-([prokaryotic ubiquitin-like protein]-gamma-L-glutamyl)-[protein]-L-lysine.. The protein operates within protein degradation; proteasomal Pup-dependent pathway. It functions in the pathway protein modification; protein pupylation. Functionally, catalyzes the covalent attachment of the prokaryotic ubiquitin-like protein modifier Pup to the proteasomal substrate proteins, thereby targeting them for proteasomal degradation. This tagging system is termed pupylation. The ligation reaction involves the side-chain carboxylate of the C-terminal glutamate of Pup and the side-chain amino group of a substrate lysine. This chain is Pup--protein ligase, found in Bifidobacterium longum subsp. infantis (strain ATCC 15697 / DSM 20088 / JCM 1222 / NCTC 11817 / S12).